The primary structure comprises 226 residues: Orotate phosphoribosyltransferase (226 aa).

5-phospho-alpha-D-ribose 1-diphosphate is bound by residues Arg-107, Lys-108, Lys-111, and 133 to 141 (EDLTTDGGS). Thr-137 is a binding site for orotate.

This sequence belongs to the purine/pyrimidine phosphoribosyltransferase family. PyrE subfamily. As to quaternary structure, homodimer. Requires Mg(2+) as cofactor.

The catalysed reaction is orotidine 5'-phosphate + diphosphate = orotate + 5-phospho-alpha-D-ribose 1-diphosphate. It functions in the pathway pyrimidine metabolism; UMP biosynthesis via de novo pathway; UMP from orotate: step 1/2. Catalyzes the transfer of a ribosyl phosphate group from 5-phosphoribose 1-diphosphate to orotate, leading to the formation of orotidine monophosphate (OMP). This Dinoroseobacter shibae (strain DSM 16493 / NCIMB 14021 / DFL 12) protein is Orotate phosphoribosyltransferase.